Reading from the N-terminus, the 200-residue chain is Large ribosomal subunit protein uL4 (200 aa).

Residues 38–67 (GRQGSKAQKTRSEVSGGGKKPWRQKGTGRA) are disordered.

The protein belongs to the universal ribosomal protein uL4 family. As to quaternary structure, part of the 50S ribosomal subunit.

Functionally, one of the primary rRNA binding proteins, this protein initially binds near the 5'-end of the 23S rRNA. It is important during the early stages of 50S assembly. It makes multiple contacts with different domains of the 23S rRNA in the assembled 50S subunit and ribosome. Forms part of the polypeptide exit tunnel. The chain is Large ribosomal subunit protein uL4 from Pseudomonas paraeruginosa (strain DSM 24068 / PA7) (Pseudomonas aeruginosa (strain PA7)).